Consider the following 248-residue polypeptide: MLYLHDVWVNWFEGEENGYNVCHFYEWRKDDTIELLDQVPLLKVDATLYHYIENELLELPQKMLEDVHHKAYIRKNHERLQQEYCFVVTDGKGIIAIDTIGYNVPIRKSRLIPRQEQMVYEMVENVQAEKYEFQVEEIEKEHHILSPSPFIMNGLTRKERQLKQLLFMALDQLHTTKNTAEIRYWFTEWDPSAYGMVQHMEFEDIWAKLYEEAKTGWSEKHEQLCERLVKGQPFFEKLWEMENEQKVN.

Belongs to the UPF0736 family.

The sequence is that of UPF0736 protein BCE_1296 from Bacillus cereus (strain ATCC 10987 / NRS 248).